We begin with the raw amino-acid sequence, 647 residues long: Acetyl-coenzyme A synthetase (647 aa).

CoA is bound by residues 190-193, threonine 310, and asparagine 334; that span reads RGGK. Residues 386–388, 410–415, aspartate 499, and arginine 514 each bind ATP; these read GEP and DTWWQT. Residue serine 522 participates in CoA binding. Arginine 525 contacts ATP. The Mg(2+) site is built by valine 536, histidine 538, and valine 541. Residue arginine 583 participates in CoA binding. Lysine 608 is modified (N6-acetyllysine).

It belongs to the ATP-dependent AMP-binding enzyme family. Requires Mg(2+) as cofactor. Post-translationally, acetylated. Deacetylation by the SIR2-homolog deacetylase activates the enzyme.

The catalysed reaction is acetate + ATP + CoA = acetyl-CoA + AMP + diphosphate. In terms of biological role, catalyzes the conversion of acetate into acetyl-CoA (AcCoA), an essential intermediate at the junction of anabolic and catabolic pathways. AcsA undergoes a two-step reaction. In the first half reaction, AcsA combines acetate with ATP to form acetyl-adenylate (AcAMP) intermediate. In the second half reaction, it can then transfer the acetyl group from AcAMP to the sulfhydryl group of CoA, forming the product AcCoA. The sequence is that of Acetyl-coenzyme A synthetase from Xanthomonas axonopodis pv. citri (strain 306).